Here is a 229-residue protein sequence, read N- to C-terminus: Orotidine 5'-phosphate decarboxylase (229 aa).

Residues D10, K32, 59 to 68 (DLKFHDIPNT), T119, R180, Q189, G209, and R210 each bind substrate. Catalysis depends on K61, which acts as the Proton donor.

This sequence belongs to the OMP decarboxylase family. Type 1 subfamily. In terms of assembly, homodimer.

The catalysed reaction is orotidine 5'-phosphate + H(+) = UMP + CO2. The protein operates within pyrimidine metabolism; UMP biosynthesis via de novo pathway; UMP from orotate: step 2/2. Catalyzes the decarboxylation of orotidine 5'-monophosphate (OMP) to uridine 5'-monophosphate (UMP). This chain is Orotidine 5'-phosphate decarboxylase, found in Legionella pneumophila (strain Lens).